Reading from the N-terminus, the 276-residue chain is Biotin synthase (276 aa).

Positions 1-226 constitute a Radical SAM core domain; the sequence is MKKIYLCAIS…EAIIMLAGGR (226 aa). Residues Cys17, Cys21, and Cys24 each coordinate [4Fe-4S] cluster. 3 residues coordinate [2Fe-2S] cluster: Cys61, Cys95, and Cys153.

Belongs to the radical SAM superfamily. Biotin synthase family. In terms of assembly, homodimer. The cofactor is [4Fe-4S] cluster. Requires [2Fe-2S] cluster as cofactor.

It carries out the reaction (4R,5S)-dethiobiotin + (sulfur carrier)-SH + 2 reduced [2Fe-2S]-[ferredoxin] + 2 S-adenosyl-L-methionine = (sulfur carrier)-H + biotin + 2 5'-deoxyadenosine + 2 L-methionine + 2 oxidized [2Fe-2S]-[ferredoxin]. It functions in the pathway cofactor biosynthesis; biotin biosynthesis; biotin from 7,8-diaminononanoate: step 2/2. Catalyzes the conversion of dethiobiotin (DTB) to biotin by the insertion of a sulfur atom into dethiobiotin via a radical-based mechanism. The chain is Biotin synthase from Nautilia profundicola (strain ATCC BAA-1463 / DSM 18972 / AmH).